A 427-amino-acid chain; its full sequence is Gamma-glutamyl phosphate reductase (427 aa).

The protein belongs to the gamma-glutamyl phosphate reductase family.

It localises to the cytoplasm. It carries out the reaction L-glutamate 5-semialdehyde + phosphate + NADP(+) = L-glutamyl 5-phosphate + NADPH + H(+). Its pathway is amino-acid biosynthesis; L-proline biosynthesis; L-glutamate 5-semialdehyde from L-glutamate: step 2/2. Catalyzes the NADPH-dependent reduction of L-glutamate 5-phosphate into L-glutamate 5-semialdehyde and phosphate. The product spontaneously undergoes cyclization to form 1-pyrroline-5-carboxylate. This chain is Gamma-glutamyl phosphate reductase, found in Anaeromyxobacter sp. (strain K).